Consider the following 1062-residue polypeptide: Suppressor of mar1-1 protein (1062 aa).

Polar residues predominate over residues 1 to 17 (MSENTTAPSDNITNEQR). Disordered stretches follow at residues 1–27 (MSENTTAPSDNITNEQRLPSGPKDDVD), 188–217 (ENSSNNTSSQHNTSSSRRGPGRPRKDASTS), 267–337 (TKQE…KKRT), 370–398 (SSKFHQIPSSPSNPVSQPAPVRTSRSATQ), 595–634 (EISTRSKIKSAEKPTTKGSSMSPKPRSASISGISDHQQEG), and 681–804 (SGEE…GNLG). An N-acetylserine modification is found at Ser2. Over residues 189 to 205 (NSSNNTSSQHNTSSSRR) the composition is skewed to low complexity. 3 stretches are compositionally biased toward polar residues: residues 267-279 (TKQESLLLSAPSS), 287-298 (SLTSVPQRTNNE), and 305-323 (STANSSSITPTPVTPNNLI). Residues 325 to 335 (IKRKRGRPPKK) are compositionally biased toward basic residues. 2 stretches are compositionally biased toward polar residues: residues 370-385 (SSKFHQIPSSPSNPVS) and 610-629 (TKGSSMSPKPRSASISGISD). Phosphoserine is present on residues Ser378, Ser379, Ser628, and Ser681. Residues 685 to 699 (AITKENAEYERKTPG) are compositionally biased toward basic and acidic residues. Phosphothreonine is present on Thr697. Over residues 704–716 (TTFVPLENSQPSD) the composition is skewed to polar residues. At Ser712 the chain carries Phosphoserine; by ATM or ATR. The residue at position 738 (Ser738) is a Phosphoserine. Over residues 781–793 (KGTSSIHNDTESA) the composition is skewed to polar residues. Position 817 is a phosphothreonine (Thr817).

In terms of assembly, interacts with RFM1. This interaction is required to recruit HST1.

The protein resides in the nucleus. DNA-binding protein that specifically binds the regulatory region of middle sporulation genes (MSE). Required for the repression of middle sporulation genes during vegetative growth. Represses expression via the recruitment of histone deacetylase HST1. This is Suppressor of mar1-1 protein (SUM1) from Saccharomyces cerevisiae (strain ATCC 204508 / S288c) (Baker's yeast).